Consider the following 319-residue polypeptide: Curved DNA-binding protein (319 aa).

The region spanning 5–69 (DYYKILGVEP…QKRAEFDEIR (65 aa)) is the J domain.

It localises to the cytoplasm. It is found in the nucleoid. DNA-binding protein that preferentially recognizes a curved DNA sequence. It is probably a functional analog of DnaJ; displays overlapping activities with DnaJ, but functions under different conditions, probably acting as a molecular chaperone in an adaptive response to environmental stresses other than heat shock. Lacks autonomous chaperone activity; binds native substrates and targets them for recognition by DnaK. Its activity is inhibited by the binding of CbpM. The sequence is that of Curved DNA-binding protein from Pseudomonas putida (strain ATCC 700007 / DSM 6899 / JCM 31910 / BCRC 17059 / LMG 24140 / F1).